A 471-amino-acid polypeptide reads, in one-letter code: Uronate isomerase (471 aa).

It belongs to the metallo-dependent hydrolases superfamily. Uronate isomerase family.

It carries out the reaction D-glucuronate = D-fructuronate. It catalyses the reaction aldehydo-D-galacturonate = keto-D-tagaturonate. Its pathway is carbohydrate metabolism; pentose and glucuronate interconversion. This Xanthomonas campestris pv. campestris (strain B100) protein is Uronate isomerase.